Reading from the N-terminus, the 775-residue chain is ADP-ribosylation factor GTPase-activating protein AGD4 (775 aa).

Residues 2 to 226 (ATFINLEDSP…IHQILTYAQQ (225 aa)) form the BAR domain. In terms of domain architecture, PH spans 288–421 (EVIKQGYLLK…WVNKITKAIG (134 aa)). The 137-residue stretch at 467-603 (DDVSTILRGL…ALVIKDESEA (137 aa)) folds into the Arf-GAP domain. The segment at 482–505 (CAECNAPEPDWASLNLGVLLCIQC) adopts a C4-type zinc-finger fold. 2 ANK repeats span residues 682–711 (QGCSLLHVACHIGDSVLLELLLQFGADLNI) and 715–744 (HGRTPLHHCISSGNHKFAKILLRRGARPSI).

In terms of tissue distribution, expressed in roots, hypocotyls, cotyledons, leaf and shoot apical meristems and siliques.

Functionally, probable GTPase-activating protein. This Arabidopsis thaliana (Mouse-ear cress) protein is ADP-ribosylation factor GTPase-activating protein AGD4 (AGD4).